We begin with the raw amino-acid sequence, 273 residues long: Ribosomal RNA small subunit methyltransferase I (273 aa).

This sequence belongs to the methyltransferase superfamily. RsmI family.

The protein resides in the cytoplasm. The catalysed reaction is cytidine(1402) in 16S rRNA + S-adenosyl-L-methionine = 2'-O-methylcytidine(1402) in 16S rRNA + S-adenosyl-L-homocysteine + H(+). Catalyzes the 2'-O-methylation of the ribose of cytidine 1402 (C1402) in 16S rRNA. The chain is Ribosomal RNA small subunit methyltransferase I from Xylella fastidiosa (strain Temecula1 / ATCC 700964).